A 663-amino-acid polypeptide reads, in one-letter code: Heparan-alpha-glucosaminide N-acetyltransferase (663 aa).

The segment at 1–24 (MTGARASAAEQRRAGRSGQARAAE) is disordered. Residues 1-190 (MTGARASAAE…LAVNEDPVDS (190 aa)) are Lumenal, vesicle-facing. 3 N-linked (GlcNAc...) asparagine glycosylation sites follow: Asn-94, Asn-142, and Asn-162. An intrachain disulfide couples Cys-151 to Cys-462. A helical membrane pass occupies residues 191-211 (NLPVSIAFLIGLAVIIVISFL). The Cytoplasmic segment spans residues 212–275 (RLLLSLDDFN…PRLRSVDTFR (64 aa)). Phosphoserine occurs at positions 243 and 245. A helical membrane pass occupies residues 276–296 (GIALILMVFVNYGGGKYWYFK). The active site involves His-297. Residues 297–302 (HASWNG) lie on the Lumenal, vesicle side of the membrane. A helical transmembrane segment spans residues 303-323 (LTVADLVFPWFVFIMGSSIFL). Residues 324-345 (SMTSILQRGCSKFRLLGKIAWR) are Cytoplasmic-facing. A helical transmembrane segment spans residues 346 to 366 (SFLLICIGIIIVNPNYCLGPL). The Lumenal, vesicle segment spans residues 367-374 (SWDKVRIP). The chain crosses the membrane as a helical span at residues 375-395 (GVLQRLGVTYFVVAVLELLFA). Topologically, residues 396–420 (KPVPEHCASERSCLSLRDITSSWPQ) are cytoplasmic. Residues 421–441 (WLLILVLEGLWLGLTFLLPVP) form a helical membrane-spanning segment. Residues 442–500 (GCPTGYLGPGGIGDFGKYPNCTGGAAGYIDRLLLGDDHLYQHPSSAVLYHTEVAYDPEG) lie on the Lumenal, vesicle side of the membrane. A helical transmembrane segment spans residues 501 to 521 (ILGTINSIVMAFLGVQAGKIL). Residues 522–529 (LYYKARTK) are Cytoplasmic-facing. A helical transmembrane segment spans residues 530-550 (DILIRFTAWCCILGLISVALT). At 551 to 564 (KVSENEGFIPVNKN) the chain is on the lumenal, vesicle side. Residues 565 to 585 (LWSLSYVTTLSSFAFFILLVL) form a helical membrane-spanning segment. The Cytoplasmic portion of the chain corresponds to 586–592 (YPVVDVK). Residues 593 to 613 (GLWTGTPFFYPGMNSILVYVG) traverse the membrane as a helical segment. The Lumenal, vesicle segment spans residues 614–634 (HEVFENYFPFQWKLKDNQSHK). The lysosomal targeting region stretch occupies residues 624 to 635 (QWKLKDNQSHKE). The helical transmembrane segment at 635–655 (EHLTQNIVATALWVLIAYILY) threads the bilayer. Over 656 to 663 (RKKIFWKI) the chain is Cytoplasmic.

As to quaternary structure, homooligomer. Homooligomerization is necessary for enzyme activity. In terms of processing, undergoes intralysosomal proteolytic cleavage; occurs within the end of the first and/or the beginning of the second luminal domain and is essential for the activation of the enzyme. Post-translationally, glycosylated. In terms of tissue distribution, widely expressed, with highest level in leukocytes, heart, liver, skeletal muscle, lung, placenta and liver.

The protein localises to the lysosome membrane. It carries out the reaction alpha-D-glucosaminyl-[heparan sulfate](n) + acetyl-CoA = N-acetyl-alpha-D-glucosaminyl-[heparan sulfate](n) + CoA + H(+). Functionally, lysosomal acetyltransferase that acetylates the non-reducing terminal alpha-glucosamine residue of intralysosomal heparin or heparan sulfate, converting it into a substrate for luminal alpha-N-acetyl glucosaminidase. The polypeptide is Heparan-alpha-glucosaminide N-acetyltransferase (HGSNAT) (Homo sapiens (Human)).